Reading from the N-terminus, the 614-residue chain is MLAGGVRSMPSPLLACWQPILLLVLGSVLSGSATGCPPRCECSAQDRAVLCHRKRFVAVPEGIPTETRLLDLGKNRIKTLNQDEFASFPHLEELELNENIVSAVEPGAFNNLFNLRTLGLRSNRLKLIPLGVFTGLSNLTKLDISENKIVILLDYMFQDLYNLKSLEVGDNDLVYISHRAFSGLNSLEQLTLEKCNLTSIPTEALSHLHGLIVLRLRHLNINAIRDYSFKRLYRLKVLEISHWPYLDTMTPNCLYGLNLTSLSITHCNLTAVPYLAVRHLVYLRFLNLSYNPISTIEGSMLHELLRLQEIQLVGGQLAMVEPYAFRGLNYLRVLNVSGNQLTTLEESVFHSVGNLETLILDSNPLACDCRLLWVFRRRWRLNFNRQQPTCATPEFVQGKEFKDFPDVLLPNYFTCRRARIRDRKAQQVFVDEGHTVQFVCRADGDPPPAILWLSPRKHLVSAKSNGRLTVFPDGTLEVRYAQVQDNGTYLCIAANAGGNDSMPAHLHVRSYSPDWPHQPNKTFAFIPNQPGEGEANSTRATVPFPFDIKTLIIATTMGFISFLGVVLFCLVLLFLWSRGKGNTKHNIEIEYVPRKSDAGISSADAPRKFNMKMI.

The signal sequence occupies residues 1–35 (MLAGGVRSMPSPLLACWQPILLLVLGSVLSGSATG). Disulfide bonds link cysteine 36–cysteine 42 and cysteine 40–cysteine 51. Residues 36–65 (CPPRCECSAQDRAVLCHRKRFVAVPEGIPT) enclose the LRRNT domain. Topologically, residues 36–555 (CPPRCECSAQ…FDIKTLIIAT (520 aa)) are extracellular. LRR repeat units lie at residues 66 to 87 (ETRL…EFAS), 90 to 111 (HLEE…AFNN), 114 to 135 (NLRT…VFTG), 138 to 159 (NLTK…MFQD), 162 to 183 (NLKS…AFSG), 186 to 207 (SLEQ…ALSH), 210 to 231 (GLIV…SFKR), 258 to 279 (NLTS…AVRH), 282 to 303 (YLRF…MLHE), 306 to 327 (RLQE…AFRG), and 330 to 351 (YLRV…VFHS). Asparagine 138 is a glycosylation site (N-linked (GlcNAc...) asparagine). A glycan (N-linked (GlcNAc...) asparagine) is linked at asparagine 196. 3 N-linked (GlcNAc...) asparagine glycosylation sites follow: asparagine 258, asparagine 268, and asparagine 287. A glycan (N-linked (GlcNAc...) asparagine) is linked at asparagine 335. One can recognise an LRRCT domain in the interval 363–417 (NPLACDCRLLWVFRRRWRLNFNRQQPTCATPEFVQGKEFKDFPDVLLPNYFTCRR). 3 cysteine pairs are disulfide-bonded: cysteine 367–cysteine 390, cysteine 369–cysteine 415, and cysteine 440–cysteine 491. In terms of domain architecture, Ig-like C2-type spans 405–507 (PDVLLPNYFT…GNDSMPAHLH (103 aa)). N-linked (GlcNAc...) asparagine glycosylation is found at asparagine 486 and asparagine 536. Residues 556–576 (TMGFISFLGVVLFCLVLLFLW) traverse the membrane as a helical segment. Topologically, residues 577–614 (SRGKGNTKHNIEIEYVPRKSDAGISSADAPRKFNMKMI) are cytoplasmic. Serine 596 is subject to Phosphoserine.

In terms of assembly, homotetramer. Forms a ternary complex with RTN4R/NGFR and RTN4R/TNFRSF19. Interacts with NGRF, RTN4R and MYT1L. Post-translationally, N-glycosylated. Contains predominantly high-mannose glycans.

Its subcellular location is the cell membrane. In terms of biological role, functional component of the Nogo receptor signaling complex (RTN4R/NGFR) in RhoA activation responsible for some inhibition of axonal regeneration by myelin-associated factors. Is also an important negative regulator of oligodentrocyte differentiation and axonal myelination. Acts in conjunction with RTN4 and RTN4R in regulating neuronal precursor cell motility during cortical development. The sequence is that of Leucine-rich repeat and immunoglobulin-like domain-containing nogo receptor-interacting protein 1 (LINGO1) from Macaca fascicularis (Crab-eating macaque).